A 174-amino-acid polypeptide reads, in one-letter code: MGKITFYEDRGFQGRHYECSSDCPNLQPYFSRCNSIRVDSGCWMLYERPNYQGHQYFLRRGDYPDYQQWLGFSDSIRSCCLIPQTSSHRLRLYEREDHKGLMVELSEDCSCIQDRFHLSEVRSVHVLEGCWVLYEMPNYLGRQYLLRPQEYRRYHDWGAMDAKAGSLRRVVDLY.

2 consecutive Beta/gamma crystallin 'Greek key' domains span residues 2-40 (GKIT…RVDS) and 41-83 (GCWM…CLIP). S-methylcysteine is present on cysteine 23. The segment at 84–87 (QTSS) is connecting peptide. Beta/gamma crystallin 'Greek key' domains lie at 88–128 (HRLR…HVLE) and 129–171 (GCWV…RRVV).

This sequence belongs to the beta/gamma-crystallin family. As to quaternary structure, monomer.

Functionally, crystallins are the dominant structural components of the vertebrate eye lens. This Canis lupus familiaris (Dog) protein is Gamma-crystallin C (CRYGC).